Here is a 181-residue protein sequence, read N- to C-terminus: Large ribosomal subunit protein uL10 (181 aa).

This sequence belongs to the universal ribosomal protein uL10 family. In terms of assembly, part of the ribosomal stalk of the 50S ribosomal subunit. The N-terminus interacts with L11 and the large rRNA to form the base of the stalk. The C-terminus forms an elongated spine to which L12 dimers bind in a sequential fashion forming a multimeric L10(L12)X complex.

Forms part of the ribosomal stalk, playing a central role in the interaction of the ribosome with GTP-bound translation factors. The sequence is that of Large ribosomal subunit protein uL10 from Chloroflexus aggregans (strain MD-66 / DSM 9485).